The primary structure comprises 271 residues: TIP41-like protein (271 aa).

An N6-acetyllysine modification is found at Lys106. Positions 173–271 (RVMPSSFFLL…PVDSESAPSE (99 aa)) are interaction with PPP2CA. Ser265 and Ser270 each carry phosphoserine.

Belongs to the TIP41 family. As to quaternary structure, interacts with PPP2CA. Interacts with PPP2CB, PPP4C and PPP6C. Interacts with IGBP1; the interaction is dependent on PPP2CA. Associates with a protein phosphatase 2A PP2A(C):IGBP1 complex. Interacts with PPP4C and PPP4R2.

It is found in the cytoplasm. Functionally, may be a allosteric regulator of serine/threonine-protein phosphatase 2A (PP2A). Inhibits catalytic activity of the PP2A(D) core complex in vitro. The PP2A(C):TIPRL complex does not show phosphatase activity. Acts as a negative regulator of serine/threonine-protein phosphatase 4 probably by inhibiting the formation of the active PPP4C:PPP4R2 complex; the function is proposed to implicate it in DNA damage response by promoting H2AX phosphorylated on Ser-140 (gamma-H2AX). May play a role in the regulation of ATM/ATR signaling pathway controlling DNA replication and repair. The sequence is that of TIP41-like protein (Tiprl) from Rattus norvegicus (Rat).